The primary structure comprises 177 residues: Protein ParB (177 aa).

The first 26 residues, 1 to 26 (MKRRSYAMLRAAAALAVLVVASPAWA), serve as a signal peptide directing secretion. Residues 27–157 (ELRGEVVRII…RGKRVGLWSD (131 aa)) form the TNase-like domain. Residues R53, E61, and R95 contribute to the active site.

As to quaternary structure, monomer. Ca(2+) is required as a cofactor. In terms of processing, the N-terminus is blocked.

The protein localises to the secreted. With respect to regulation, endonuclease activity is inhibited by EDTA. Involved in plasmid partition. An endonuclease that acts on supercoiled dsDNA, converting it first to open circular DNA and then linearizing it. Preferentially cleaves regions in dsDNA that are capable of forming ssDNA, such as AT-rich regions and sequences that can form cruciforms. Has poor endonucleolytic activity on linear DNA, has 5'-3' exonuclease activity on dsDNA cleaving generating 3'-phosphonucleotides. This is Protein ParB from Escherichia coli.